The sequence spans 186 residues: Imidazole glycerol phosphate synthase subunit HisH (186 aa).

Residues 1–186 form the Glutamine amidotransferase type-1 domain; the sequence is MIAIIDYGSG…KLLRNFGELA (186 aa). Cys-72 serves as the catalytic Nucleophile. Active-site residues include His-167 and Glu-169.

In terms of assembly, heterodimer of HisH and HisF.

The protein localises to the cytoplasm. The enzyme catalyses 5-[(5-phospho-1-deoxy-D-ribulos-1-ylimino)methylamino]-1-(5-phospho-beta-D-ribosyl)imidazole-4-carboxamide + L-glutamine = D-erythro-1-(imidazol-4-yl)glycerol 3-phosphate + 5-amino-1-(5-phospho-beta-D-ribosyl)imidazole-4-carboxamide + L-glutamate + H(+). It carries out the reaction L-glutamine + H2O = L-glutamate + NH4(+). Its pathway is amino-acid biosynthesis; L-histidine biosynthesis; L-histidine from 5-phospho-alpha-D-ribose 1-diphosphate: step 5/9. Functionally, IGPS catalyzes the conversion of PRFAR and glutamine to IGP, AICAR and glutamate. The HisH subunit catalyzes the hydrolysis of glutamine to glutamate and ammonia as part of the synthesis of IGP and AICAR. The resulting ammonia molecule is channeled to the active site of HisF. In Picrophilus torridus (strain ATCC 700027 / DSM 9790 / JCM 10055 / NBRC 100828 / KAW 2/3), this protein is Imidazole glycerol phosphate synthase subunit HisH.